A 533-amino-acid chain; its full sequence is Adenine deaminase (533 aa).

This sequence belongs to the metallo-dependent hydrolases superfamily. Adenine deaminase family. Mn(2+) is required as a cofactor.

It catalyses the reaction adenine + H2O + H(+) = hypoxanthine + NH4(+). The protein is Adenine deaminase of Sulfurovum sp. (strain NBC37-1).